Consider the following 542-residue polypeptide: Membrane protein insertase YidC (542 aa).

A helical transmembrane segment spans residues 5–25; the sequence is TLLAVILSITVFYVFSLLFAP. The disordered stretch occupies residues 33 to 64; the sequence is ESTGQAVSAPVSAGQPVAGGVQPSASAPSLPA. Low complexity predominate over residues 54 to 64; it reads QPSASAPSLPA. 5 helical membrane passes run 323–343, 345–365, 419–439, 463–483, and 500–520; these read LDLG…KYFY, YVGN…ALFF, LPML…MFSI, MLGL…TMFI, and MLAL…GLVL.

Belongs to the OXA1/ALB3/YidC family. Type 1 subfamily. In terms of assembly, interacts with the Sec translocase complex via SecD. Specifically interacts with transmembrane segments of nascent integral membrane proteins during membrane integration.

Its subcellular location is the cell inner membrane. In terms of biological role, required for the insertion and/or proper folding and/or complex formation of integral membrane proteins into the membrane. Involved in integration of membrane proteins that insert both dependently and independently of the Sec translocase complex, as well as at least some lipoproteins. Aids folding of multispanning membrane proteins. The protein is Membrane protein insertase YidC of Pelobacter propionicus (strain DSM 2379 / NBRC 103807 / OttBd1).